We begin with the raw amino-acid sequence, 71 residues long: Pre-hexon-linking protein VIII (71 aa).

The protein belongs to the adenoviridae hexon-linking protein family. Interacts with the peripentonal hexons as well as the hexons in the facets. Part of a complex composed of the core-capsid bridging protein, the endosome lysis protein VI and the hexon-linking protein VIII; these interactions bridge the virus core to the capsid. In terms of processing, cleaved by the viral protease during virion maturation. May cause the middle segment to be shed from the capsid.

The protein resides in the host nucleus. The protein localises to the virion. In terms of biological role, structural component of the virion that acts as a cement protein on the capsid interior and which glue the peripentonal hexons and group-of-nine hexons together. In Canine adenovirus serotype 1 (strain Glaxo) (CAdV-1), this protein is Pre-hexon-linking protein VIII.